The sequence spans 555 residues: Hydrogenase-4 component G (555 aa).

This sequence belongs to the complex I 49 kDa subunit family. [4Fe-4S] cluster is required as a cofactor.

In terms of biological role, possible component of hydrogenase 4. This is Hydrogenase-4 component G from Escherichia coli (strain K12).